Consider the following 443-residue polypeptide: Chromosome partition protein MukF (443 aa).

A leucine-zipper region spans residues 209 to 237; sequence LDETSGNLRELQDVLNASGDKLQSQLLRI.

It belongs to the MukF family. As to quaternary structure, interacts, and probably forms a ternary complex, with MukE and MukB via its C-terminal region. The complex formation is stimulated by calcium or magnesium. It is required for an interaction between MukE and MukB.

It is found in the cytoplasm. It localises to the nucleoid. Involved in chromosome condensation, segregation and cell cycle progression. May participate in facilitating chromosome segregation by condensation DNA from both sides of a centrally located replisome during cell division. Not required for mini-F plasmid partitioning. Probably acts via its interaction with MukB and MukE. Overexpression results in anucleate cells. It has a calcium binding activity. This chain is Chromosome partition protein MukF, found in Glaesserella parasuis serovar 5 (strain SH0165) (Haemophilus parasuis).